The primary structure comprises 214 residues: MGKRIGLLGGTFDPVHIGHLRGALEVAESMQLDELRLVPSARPPHRDTPQVSALDRLAMVECAVAGVSPLVVDDRELKRDKPSYTIDTLEQMRAELAADDQLFLLLGWDAFCGLPTWHRWEELLQHCHILVLQRPDADSEPPDALRNLLAARSVSDPLALQGPGGHIAFVWQTPLAVSATQIRQLLASGKSVRFLVPDAVLAYIDAHGLYRAPN.

Belongs to the NadD family.

The enzyme catalyses nicotinate beta-D-ribonucleotide + ATP + H(+) = deamido-NAD(+) + diphosphate. It participates in cofactor biosynthesis; NAD(+) biosynthesis; deamido-NAD(+) from nicotinate D-ribonucleotide: step 1/1. Its function is as follows. Catalyzes the reversible adenylation of nicotinate mononucleotide (NaMN) to nicotinic acid adenine dinucleotide (NaAD). The chain is Probable nicotinate-nucleotide adenylyltransferase from Pseudomonas fluorescens (strain ATCC BAA-477 / NRRL B-23932 / Pf-5).